We begin with the raw amino-acid sequence, 267 residues long: Apolipoprotein A-I (267 aa).

The signal sequence occupies residues 1–18; sequence MKAAVLTLAVLFLTGSQA. 2 consecutive repeat copies span residues 68 to 89 and 90 to 111. Residues 68–267 are 10 X approximate tandem repeats; that stretch reads LKLLDNWDSV…EEYTKKLNTQ (200 aa). Methionine sulfoxide is present on M110. The stretch at 112–122 is one 3; half-length repeat; it reads KDLEEVKAKVQ. A run of 5 repeats spans residues 123-144, 145-166, 167-188, 189-210, and 211-232. M136 carries the methionine sulfoxide modification. The stretch at 233-243 is one 9; half-length repeat; sequence PALEDLRQGLL. Repeat 10 spans residues 244 to 267; it reads PVLESFKVSFLSALEEYTKKLNTQ.

It belongs to the apolipoprotein A1/A4/E family. As to quaternary structure, homodimer. Interacts with APOA1BP and CLU. Component of a sperm activating protein complex (SPAP), consisting of APOA1, an immunoglobulin heavy chain, an immunoglobulin light chain and albumin. Interacts with NDRG1. Interacts with SCGB3A2. Interacts with NAXE and YJEFN3. In terms of processing, glycosylated. Palmitoylated. Post-translationally, phosphorylation sites are present in the extracellular medium. Major protein of plasma HDL, also found in chylomicrons.

Its subcellular location is the secreted. In terms of biological role, participates in the reverse transport of cholesterol from tissues to the liver for excretion by promoting cholesterol efflux from tissues and by acting as a cofactor for the lecithin cholesterol acyltransferase (LCAT). As part of the SPAP complex, activates spermatozoa motility. The sequence is that of Apolipoprotein A-I (APOA1) from Pan paniscus (Pygmy chimpanzee).